Here is a 510-residue protein sequence, read N- to C-terminus: Inositol-3-phosphate synthase (510 aa).

24 residues coordinate NAD(+): G70, G71, N72, N73, D143, I180, Q190, R193, T230, A231, N232, T233, G281, S282, D306, S309, N340, N341, D342, K355, G393, D394, D422, and S423.

This sequence belongs to the myo-inositol 1-phosphate synthase family. NAD(+) is required as a cofactor.

The protein resides in the cytoplasm. It is found in the cytosol. Its subcellular location is the nucleus. It catalyses the reaction D-glucose 6-phosphate = 1D-myo-inositol 3-phosphate. It participates in polyol metabolism; myo-inositol biosynthesis; myo-inositol from D-glucose 6-phosphate: step 1/2. In terms of biological role, key enzyme in myo-inositol biosynthesis pathway that catalyzes the conversion of glucose 6-phosphate to 1-myo-inositol 1-phosphate in a NAD-dependent manner. This chain is Inositol-3-phosphate synthase, found in Zea mays (Maize).